A 249-amino-acid chain; its full sequence is 5'-nucleotidase SurE (249 aa).

The a divalent metal cation site is built by aspartate 8, aspartate 9, serine 39, and asparagine 91.

This sequence belongs to the SurE nucleotidase family. The cofactor is a divalent metal cation.

It localises to the cytoplasm. The enzyme catalyses a ribonucleoside 5'-phosphate + H2O = a ribonucleoside + phosphate. Functionally, nucleotidase that shows phosphatase activity on nucleoside 5'-monophosphates. The sequence is that of 5'-nucleotidase SurE from Vesicomyosocius okutanii subsp. Calyptogena okutanii (strain HA).